A 207-amino-acid polypeptide reads, in one-letter code: MQVQEKFTAETFPASPEKVTLEGKNKFLGFWLFLGGETVLFASLFATFLALRNSNAGDPPTTEMFDVTLVFIATMLLLTSSLTSVYAMYHMKNFSFGKMQLWLGITILLGAGFLGLEIYEFKHYTHEFGFTITSSALGSAFYTLVGTHGAHVAFGLMWISTLMIRNAKRGLNLYTAPKFYVASLYWHFIDVVWVFIFTVVYLMGMVG.

The next 5 helical transmembrane spans lie at 30 to 50 (FWLF…TFLA), 67 to 87 (VTLV…SVYA), 101 to 121 (LWLG…IYEF), 144 to 164 (LVGT…TLMI), and 186 to 206 (WHFI…MGMV).

This sequence belongs to the cytochrome c oxidase subunit 3 family.

It localises to the cell membrane. It carries out the reaction 4 Fe(II)-[cytochrome c] + O2 + 8 H(+)(in) = 4 Fe(III)-[cytochrome c] + 2 H2O + 4 H(+)(out). The sequence is that of Cytochrome c oxidase subunit 3 (ctaE) from Bacillus subtilis (strain 168).